Consider the following 205-residue polypeptide: Large ribosomal subunit protein uL4 (205 aa).

Positions 44 to 77 (KRQGTSKVKNRSAVRGGGKKPWRQKGTGRARQGS) are disordered. Basic residues predominate over residues 51–71 (VKNRSAVRGGGKKPWRQKGTG).

Belongs to the universal ribosomal protein uL4 family. As to quaternary structure, part of the 50S ribosomal subunit.

In terms of biological role, one of the primary rRNA binding proteins, this protein initially binds near the 5'-end of the 23S rRNA. It is important during the early stages of 50S assembly. It makes multiple contacts with different domains of the 23S rRNA in the assembled 50S subunit and ribosome. Its function is as follows. Forms part of the polypeptide exit tunnel. This chain is Large ribosomal subunit protein uL4, found in Lactobacillus delbrueckii subsp. bulgaricus (strain ATCC 11842 / DSM 20081 / BCRC 10696 / JCM 1002 / NBRC 13953 / NCIMB 11778 / NCTC 12712 / WDCM 00102 / Lb 14).